A 496-amino-acid polypeptide reads, in one-letter code: MNRRLPATLRELSECFRSKSLDPLTFTEHTLHRASDRAKHLNAFVRISSQTALQQAEASTQRHRSGSTLGPLDGATIAVKDNFCTRNVATTCASRMLESFVPTYSATVWERLERGGAVLVGKTNMDQFGMGSGTVDSIFGPTRNCWSESLEGERFRIAGGSSGGSAVAVASGVCFAALGSDTGGSTRNPASYCGVVGLKPTYGLLSRHGLIPLVNSMDVPGILTRTVKDCATVLNAIAGPDERDSTTVKKPFKPVELPESICLKGLRIGIPVEYHCEGLSEEVLHTWAKVADMLEDAGATVTSVSLPYTSASIFVYSILNQCEVSSNMSRYDGIEFGLRSDEDASTEQLYARSRAEGFNGVVKNRILTGNYFLLRKNYDKFFQKALQVRRLIAEDFDKAFTKVDFLLTPTTLSSAPLYEDFVQGTNRDQCAVQDFCTQPANMGGIPAISLPIRLSEHKLPISLQLMGPNFSEQNLLTVAKWIESQVEFEHLCATND.

Catalysis depends on charge relay system residues Lys80 and Ser161. The active-site Acyl-ester intermediate is Ser185.

It belongs to the amidase family. GatA subfamily. Subunit of the heterotrimeric GatCAB amidotransferase (AdT) complex, composed of A, B and C subunits.

Its subcellular location is the mitochondrion. The enzyme catalyses L-glutamyl-tRNA(Gln) + L-glutamine + ATP + H2O = L-glutaminyl-tRNA(Gln) + L-glutamate + ADP + phosphate + H(+). In terms of biological role, allows the formation of correctly charged Gln-tRNA(Gln) through the transamidation of misacylated Glu-tRNA(Gln) in the mitochondria. The reaction takes place in the presence of glutamine and ATP through an activated gamma-phospho-Glu-tRNA(Gln). The polypeptide is Glutamyl-tRNA(Gln) amidotransferase subunit A, mitochondrial (Culex quinquefasciatus (Southern house mosquito)).